Here is a 174-residue protein sequence, read N- to C-terminus: ATP-dependent protease subunit HslV (174 aa).

Residue threonine 2 is part of the active site. The Na(+) site is built by alanine 157, cysteine 160, and threonine 163.

The protein belongs to the peptidase T1B family. HslV subfamily. A double ring-shaped homohexamer of HslV is capped on each side by a ring-shaped HslU homohexamer. The assembly of the HslU/HslV complex is dependent on binding of ATP.

The protein localises to the cytoplasm. The catalysed reaction is ATP-dependent cleavage of peptide bonds with broad specificity.. Its activity is regulated as follows. Allosterically activated by HslU binding. In terms of biological role, protease subunit of a proteasome-like degradation complex believed to be a general protein degrading machinery. In Shewanella baltica (strain OS195), this protein is ATP-dependent protease subunit HslV.